The following is a 119-amino-acid chain: Tubulin-specific chaperone A (119 aa).

It belongs to the TBCA family. As to quaternary structure, supercomplex made of cofactors A to E. Cofactors A and D function by capturing and stabilizing tubulin in a quasi-native conformation. Cofactor E binds to the cofactor D-tubulin complex; interaction with cofactor C then causes the release of tubulin polypeptides that are committed to the native state.

It is found in the cytoplasm. The protein resides in the cytoskeleton. In terms of biological role, required for the maintenance of microtubule structures and cell polarity. Beta-tubulin-folding protein; may have a regulatory role in the tubulin-folding pathway. This is Tubulin-specific chaperone A (alp31) from Schizosaccharomyces pombe (strain 972 / ATCC 24843) (Fission yeast).